The primary structure comprises 276 residues: Exosome complex component Rrp42 (276 aa).

Belongs to the RNase PH family. Rrp42 subfamily. As to quaternary structure, component of the archaeal exosome complex. Forms a hexameric ring-like arrangement composed of 3 Rrp41-Rrp42 heterodimers. The hexameric ring associates with a trimer of Rrp4 and/or Csl4 subunits.

It localises to the cytoplasm. Functionally, non-catalytic component of the exosome, which is a complex involved in RNA degradation. Contributes to the structuring of the Rrp41 active site. This is Exosome complex component Rrp42 from Aeropyrum pernix (strain ATCC 700893 / DSM 11879 / JCM 9820 / NBRC 100138 / K1).